Reading from the N-terminus, the 266-residue chain is MSIWRPPLHNVPGLEHLWYESVHRSHAAVCGCGDPVRHLTALAERYGIPGGSRSSGAPGVGGNHNPPQIRRARHPAAAPDPPAGNQPPALPWHGDGGNESGAGGGESGGPVADFADDGLDDLVAALDEEERRLQYPRETTKRTETVDERKRERSRSPRRDAGGLGPRAAPAAAPRAVSTPKRAQVPLRAVSQNPTGSPRRSLPRVGPEQWLLPERKPKPAPTSGDWAMEYLMCKIMNRPPRSQLTDPPFYPYCKNNYNVTFQLNYK.

Disordered regions lie at residues 50 to 116 (GGSR…DFAD) and 128 to 224 (EEER…PTSG). Over residues 78 to 90 (APDPPAGNQPPAL) the composition is skewed to pro residues. Gly residues predominate over residues 94-108 (GDGGNESGAGGGESG). Residues 129–161 (EERRLQYPRETTKRTETVDERKRERSRSPRRDA) are compositionally biased toward basic and acidic residues. A compositionally biased stretch (low complexity) spans 166 to 176 (PRAAPAAAPRA).

This is an uncharacterized protein from Homo sapiens (Human).